A 285-amino-acid chain; its full sequence is ATP synthase gamma chain (285 aa).

The protein belongs to the ATPase gamma chain family. As to quaternary structure, F-type ATPases have 2 components, CF(1) - the catalytic core - and CF(0) - the membrane proton channel. CF(1) has five subunits: alpha(3), beta(3), gamma(1), delta(1), epsilon(1). CF(0) has three main subunits: a, b and c.

It localises to the cell membrane. Its function is as follows. Produces ATP from ADP in the presence of a proton gradient across the membrane. The gamma chain is believed to be important in regulating ATPase activity and the flow of protons through the CF(0) complex. The sequence is that of ATP synthase gamma chain from Halalkalibacterium halodurans (strain ATCC BAA-125 / DSM 18197 / FERM 7344 / JCM 9153 / C-125) (Bacillus halodurans).